The sequence spans 452 residues: Coiled-coil domain-containing protein 71 (452 aa).

The tract at residues 81–106 (PSQTKLQARAPTPAATSPPASAPQTA) is disordered. Residues 87–106 (QARAPTPAATSPPASAPQTA) are compositionally biased toward low complexity. Residue S129 is modified to Phosphoserine. Disordered stretches follow at residues 209–256 (PLKV…GLQS) and 322–404 (AREV…LGPG). Residues 279–344 (KAAQAKAACA…QAKAKVARTQ (66 aa)) are a coiled coil. Over residues 332–344 (KAVQAKAKVARTQ) the composition is skewed to low complexity. Residues 377 to 386 (RTEEAKDLSP) are compositionally biased toward basic and acidic residues.

The sequence is that of Coiled-coil domain-containing protein 71 (CCDC71) from Bos taurus (Bovine).